Consider the following 239-residue polypeptide: Fatty acid metabolism regulator protein (239 aa).

An HTH gntR-type domain is found at Lys6–Phe74. Positions Glu34–Gln53 form a DNA-binding region, H-T-H motif.

In terms of assembly, homodimer.

Its subcellular location is the cytoplasm. Functionally, multifunctional regulator of fatty acid metabolism. The polypeptide is Fatty acid metabolism regulator protein (Shewanella denitrificans (strain OS217 / ATCC BAA-1090 / DSM 15013)).